A 719-amino-acid polypeptide reads, in one-letter code: Polyribonucleotide nucleotidyltransferase (719 aa).

The Mg(2+) site is built by Asp-507 and Asp-513. Positions Pro-573 to Ile-633 constitute a KH domain. Positions Gly-658–Glu-719 constitute an S1 motif domain.

Belongs to the polyribonucleotide nucleotidyltransferase family. The cofactor is Mg(2+).

The protein resides in the cytoplasm. It catalyses the reaction RNA(n+1) + phosphate = RNA(n) + a ribonucleoside 5'-diphosphate. Its function is as follows. Involved in mRNA degradation. Catalyzes the phosphorolysis of single-stranded polyribonucleotides processively in the 3'- to 5'-direction. This is Polyribonucleotide nucleotidyltransferase from Campylobacter jejuni subsp. jejuni serotype O:2 (strain ATCC 700819 / NCTC 11168).